We begin with the raw amino-acid sequence, 452 residues long: Isocitrate dehydrogenase [NADP], mitochondrial (452 aa).

The transit peptide at 1 to 39 (MAGYLRVVRSLCRASGSRPAWAPAALTAPTSQEQPRRHY) directs the protein to the mitochondrion. 4 positions are modified to N6-acetyllysine: K45, K48, K67, and K69. N6-acetyllysine; alternate occurs at positions 80 and 106. N6-succinyllysine; alternate is present on residues K80 and K106. NADP(+) contacts are provided by residues 115-117 (TIT) and R122. T117 is a binding site for D-threo-isocitrate. D-threo-isocitrate contacts are provided by residues 134–140 (SPNGTIR) and R149. Residue K155 is modified to N6-acetyllysine. K166 is subject to N6-acetyllysine; alternate. Position 166 is an N6-succinyllysine; alternate (K166). Residue R172 coordinates D-threo-isocitrate. Residues K180 and K193 each carry the N6-acetyllysine; alternate modification. N6-succinyllysine; alternate occurs at positions 180 and 193. An N6-acetyllysine modification is found at K199. K256 carries the N6-acetyllysine; alternate modification. At K256 the chain carries N6-succinyllysine; alternate. 4 positions are modified to N6-acetyllysine: K263, K272, K275, and K280. K282 is subject to N6-acetyllysine; alternate. K282 is modified (N6-succinyllysine; alternate). Residue D291 coordinates Mn(2+). K299 is an NADP(+) binding site. D314 is a binding site for Mn(2+). NADP(+)-binding positions include 349–354 (GTVTRH) and N367. K384 is modified (N6-acetyllysine; alternate). N6-succinyllysine; alternate is present on K384. Residues K400, K413, and K442 each carry the N6-acetyllysine modification.

The protein belongs to the isocitrate and isopropylmalate dehydrogenases family. Homodimer. Mg(2+) is required as a cofactor. The cofactor is Mn(2+). Post-translationally, acetylation at Lys-413 dramatically reduces catalytic activity. Deacetylated by SIRT3.

It is found in the mitochondrion. It catalyses the reaction D-threo-isocitrate + NADP(+) = 2-oxoglutarate + CO2 + NADPH. In terms of biological role, plays a role in intermediary metabolism and energy production. It may tightly associate or interact with the pyruvate dehydrogenase complex. The polypeptide is Isocitrate dehydrogenase [NADP], mitochondrial (IDH2) (Homo sapiens (Human)).